We begin with the raw amino-acid sequence, 410 residues long: Thyroid hormone receptor alpha (410 aa).

The interval 1-32 (MEQKPSKVECGSDPEESSTRSPDGKRKRKNGQ) is disordered. The segment at 1–52 (MEQKPSKVECGSDPEESSTRSPDGKRKRKNGQCSLKTSMSGYIPSYLDKDEQ) is modulating. Zn(2+) is bound by residues cysteine 53, cysteine 56, cysteine 70, cysteine 73, cysteine 91, cysteine 97, cysteine 107, and cysteine 110. NR C4-type zinc fingers lie at residues 53–73 (CVVCGDKATGYHYRCITCEGC) and 91–115 (CKYDSCCVIDKITRNQCQLCRFKKC). Positions 53–127 (CVVCGDKATG…VGMAMDLVLD (75 aa)) form a DNA-binding region, nuclear receptor. Positions 163–407 (EEWDLIHVAT…PPLFLEVFED (245 aa)) constitute an NR LBD domain. 2 residues coordinate 3,3',5-triiodo-L-thyronine: arginine 228 and serine 277.

The protein belongs to the nuclear hormone receptor family. NR1 subfamily. Binds DNA as a dimer; homodimer and heterodimer with RXRB. Interacts with NCOA3 and NCOA6 coactivators, leading to a strong increase of transcription of target genes. Probably interacts with SFPQ. Interacts with C1D. Interacts with AKAP13. Interacts with TP53INP2. Interacts with PER2. Interacts with TACC1. The interaction with isoform alpha-1, but not alpha-2, is decreased in the presence of thyroid hormone T3.

Its subcellular location is the nucleus. The protein localises to the cytoplasm. Nuclear hormone receptor that can act as a repressor or activator of transcription. High affinity receptor for thyroid hormones, including triiodothyronine and thyroxine. This is Thyroid hormone receptor alpha (THRA) from Ovis aries (Sheep).